We begin with the raw amino-acid sequence, 178 residues long: ATP-dependent protease subunit HslV (178 aa).

Residue Thr-5 is part of the active site. Na(+) contacts are provided by Ala-160, Cys-163, and Thr-166.

This sequence belongs to the peptidase T1B family. HslV subfamily. As to quaternary structure, a double ring-shaped homohexamer of HslV is capped on each side by a ring-shaped HslU homohexamer. The assembly of the HslU/HslV complex is dependent on binding of ATP.

Its subcellular location is the cytoplasm. It carries out the reaction ATP-dependent cleavage of peptide bonds with broad specificity.. Its activity is regulated as follows. Allosterically activated by HslU binding. Protease subunit of a proteasome-like degradation complex believed to be a general protein degrading machinery. The protein is ATP-dependent protease subunit HslV of Magnetococcus marinus (strain ATCC BAA-1437 / JCM 17883 / MC-1).